The primary structure comprises 106 residues: Large ribosomal subunit protein eL42 (106 aa).

It belongs to the eukaryotic ribosomal protein eL42 family.

This chain is Large ribosomal subunit protein eL42 (RPL44), found in Cyberlindnera jadinii (Torula yeast).